A 395-amino-acid chain; its full sequence is Xylose isomerase (395 aa).

Residues His54 and Asp57 contribute to the active site. Mg(2+) contacts are provided by Glu181, Glu217, His220, Asp245, Asp255, Asp257, and Asp293.

The protein belongs to the xylose isomerase family. As to quaternary structure, homotetramer. Mg(2+) is required as a cofactor.

The protein localises to the cytoplasm. The enzyme catalyses alpha-D-xylose = alpha-D-xylulofuranose. In Pseudarthrobacter chlorophenolicus (strain ATCC 700700 / DSM 12829 / CIP 107037 / JCM 12360 / KCTC 9906 / NCIMB 13794 / A6) (Arthrobacter chlorophenolicus), this protein is Xylose isomerase.